The sequence spans 587 residues: Arginine--tRNA ligase (587 aa).

The short motif at 127-137 (PNLAKEMHVGH) is the 'HIGH' region element.

This sequence belongs to the class-I aminoacyl-tRNA synthetase family. In terms of assembly, monomer.

The protein resides in the cytoplasm. The catalysed reaction is tRNA(Arg) + L-arginine + ATP = L-arginyl-tRNA(Arg) + AMP + diphosphate. The sequence is that of Arginine--tRNA ligase from Pseudomonas aeruginosa (strain ATCC 15692 / DSM 22644 / CIP 104116 / JCM 14847 / LMG 12228 / 1C / PRS 101 / PAO1).